We begin with the raw amino-acid sequence, 122 residues long: Large ribosomal subunit protein bL12 (122 aa).

It belongs to the bacterial ribosomal protein bL12 family. In terms of assembly, homodimer. Part of the ribosomal stalk of the 50S ribosomal subunit. Forms a multimeric L10(L12)X complex, where L10 forms an elongated spine to which 2 to 4 L12 dimers bind in a sequential fashion. Binds GTP-bound translation factors.

In terms of biological role, forms part of the ribosomal stalk which helps the ribosome interact with GTP-bound translation factors. Is thus essential for accurate translation. This is Large ribosomal subunit protein bL12 from Stenotrophomonas maltophilia (strain R551-3).